The primary structure comprises 63 residues: Bowman-Birk type proteinase inhibitor B-II (63 aa).

7 disulfide bridges follow: C5-C62, C6-C23, C9-C57, C11-C21, C30-C37, C34-C49, and C39-C47.

The protein belongs to the Bowman-Birk serine protease inhibitor family.

This Arachis hypogaea (Peanut) protein is Bowman-Birk type proteinase inhibitor B-II.